Consider the following 285-residue polypeptide: RNA polymerase sigma factor RpoH (285 aa).

Positions 53–122 are sigma-70 factor domain-2; that stretch reads LILSHLRFVI…IHEYVLRNWR (70 aa). Residues 77–80 carry the Interaction with polymerase core subunit RpoC motif; that stretch reads DLIQ. The tract at residues 229–281 is sigma-70 factor domain-4; the sequence is ALLRLDERSRNIIRARWLDKKEKNTLQKIANNYGISAERVRQLEKNAMKKLKI. A DNA-binding region (H-T-H motif) is located at residues 254–273; the sequence is LQKIANNYGISAERVRQLEK.

Belongs to the sigma-70 factor family. RpoH subfamily. Interacts with the RNA polymerase core enzyme.

The protein resides in the cytoplasm. Functionally, sigma factors are initiation factors that promote the attachment of RNA polymerase to specific initiation sites and are then released. This sigma factor is involved in regulation of expression of heat shock genes. This is RNA polymerase sigma factor RpoH from Buchnera aphidicola subsp. Schizaphis graminum (strain Sg).